A 757-amino-acid chain; its full sequence is Polyribonucleotide nucleotidyltransferase (757 aa).

Mg(2+) contacts are provided by Asp525 and Asp531. One can recognise a KH domain in the interval 591-650 (PRVISVNIPVDKIGELIGPKGKTINAIQDETGADISIEEDGTVYIGAVDGPSADAARAQV). The S1 motif domain occupies 662–734 (GESFLGTVVK…DRGKLSLAPV (73 aa)). The interval 737–757 (ETADQEGRDAASHGSEAPAEG) is disordered.

It belongs to the polyribonucleotide nucleotidyltransferase family. Mg(2+) is required as a cofactor.

Its subcellular location is the cytoplasm. The catalysed reaction is RNA(n+1) + phosphate = RNA(n) + a ribonucleoside 5'-diphosphate. Its function is as follows. Involved in mRNA degradation. Catalyzes the phosphorolysis of single-stranded polyribonucleotides processively in the 3'- to 5'-direction. The sequence is that of Polyribonucleotide nucleotidyltransferase from Clavibacter michiganensis subsp. michiganensis (strain NCPPB 382).